A 775-amino-acid chain; its full sequence is Probable ubiquitin carboxyl-terminal hydrolase creB (775 aa).

Residues 1–45 are disordered; sequence MGSFLRSFRHNGGSTAPSVGAVPAKKEPQPPPMTPLEKRLLDMGP. Positions 36-45 are enriched in basic and acidic residues; sequence LEKRLLDMGP. Residues 55 to 468 form the USP domain; sequence YGMENYGNTC…CAYVLFYQET (414 aa). The active-site Nucleophile is cysteine 64. Disordered stretches follow at residues 113–146 and 238–269; these read EAEA…DSPE and ASKQ…KTPN. Residues 256-269 show a composition bias toward polar residues; the sequence is SVDQSSSTGSKTPN. The active-site Proton acceptor is histidine 419. Residues 496–775 form a disordered region; that stretch reads LKQNGFPQSP…LRKKSFSILS (280 aa). Low complexity-rich tracts occupy residues 546 to 566 and 576 to 585; these read ESAP…SPLS and ERVTTVATPP. Positions 586–653 form a coiled coil; sequence KNDALAKKER…ASKAEEDRRL (68 aa). A compositionally biased stretch (basic and acidic residues) spans 589–662; that stretch reads ALAKKERARE…LSHENGKEKQ (74 aa). Residues 668-679 show a composition bias toward basic residues; that stretch reads RLKRGSKSLSHR. Residues 705–725 are compositionally biased toward low complexity; sequence SQTGPTSEQQQQQQQQQSPPN. The segment covering 739-757 has biased composition (basic and acidic residues); it reads TIREDEQVNHKDSKHERTG. Basic residues predominate over residues 758 to 775; it reads HGKWRSFSLRKKSFSILS.

The protein belongs to the peptidase C19 family. Interacts with creA, creC and qutD.

The catalysed reaction is Thiol-dependent hydrolysis of ester, thioester, amide, peptide and isopeptide bonds formed by the C-terminal Gly of ubiquitin (a 76-residue protein attached to proteins as an intracellular targeting signal).. In terms of biological role, ubiquitin thioesterase component of the regulatory network controlling carbon source utilization through ubiquitination and deubiquitination involving creA, creB, creC, creD and acrB. Deubiquitinates the creA catabolic repressor and the quinate permease qutD. Also plays a role in response to carbon starvation and the control of extracellular proteases activity. The protein is Probable ubiquitin carboxyl-terminal hydrolase creB (creB) of Aspergillus fumigatus (strain ATCC MYA-4609 / CBS 101355 / FGSC A1100 / Af293) (Neosartorya fumigata).